Reading from the N-terminus, the 353-residue chain is Protein CEPU-1 (353 aa).

A signal peptide spans 1–28 (MAQAKMQHPVSWVIFAGMAALLLFQGVP). 3 consecutive Ig-like C2-type domains span residues 37-124 (PKAM…PKTS), 134-216 (PKIT…VKVT), and 220-314 (PPYI…ETTT). N-linked (GlcNAc...) asparagine glycosylation is found at N42, N68, and N150. C55 and C113 form a disulfide bridge. 2 disulfide bridges follow: C155–C199 and C241–C293. N-linked (GlcNAc...) asparagine glycosylation is found at N282, N290, and N303. S330 carries the GPI-anchor amidated serine lipid modification. The propeptide at 331–353 (GAWRRGSCAWLLALPLAQLARQF) is removed in mature form.

The protein belongs to the immunoglobulin superfamily. IgLON family. As to quaternary structure, interacts with NEGR1. As to expression, found on the dendrites, somata and axons of developing Purkinje cells. Undetectable on other neurons like Golgi or granule cells.

Its subcellular location is the cell membrane. Functionally, it may be a cellular address molecule specific to Purkinje cells. It may represent a receptor or a subunit of a receptor complex. The sequence is that of Protein CEPU-1 from Gallus gallus (Chicken).